A 384-amino-acid chain; its full sequence is Substance-K receptor (384 aa).

The Extracellular portion of the chain corresponds to 1–32 (MGACVVMTDINISSGLDSNATGITAFSMPGWQ). N-linked (GlcNAc...) asparagine glycans are attached at residues asparagine 11 and asparagine 19. A helical transmembrane segment spans residues 33-56 (LALWTAAYLALVLVAVMGNATVIW). Over 57-69 (IILAHQRMRTVTN) the chain is Cytoplasmic. A helical membrane pass occupies residues 70-90 (YFIVNLALADLCMAAFNAAFN). Over 91 to 107 (FVYASHNIWYFGRAFCY) the chain is Extracellular. A disulfide bridge connects residues cysteine 106 and cysteine 181. The helical transmembrane segment at 108–129 (FQNLFPITAMFVSIYSMTAIAA) threads the bilayer. At 130 to 149 (DRYMAIVHPFQPRLSAPGTR) the chain is on the cytoplasmic side. Residues 150–170 (AVIAGIWLVALALAFPQCFYS) form a helical membrane-spanning segment. Residues 171–196 (TITTDEGATKCVVAWPEDSGGKMLLL) are Extracellular-facing. A helical transmembrane segment spans residues 197 to 218 (YHLIVIALIYFLPLVVMFVAYS). At 219-251 (VIGLTLWRRSVPGHQAHGANLRHLQAKKKFVKT) the chain is on the cytoplasmic side. A helical transmembrane segment spans residues 252-272 (MVLVVVTFAICWLPYHLYFIL). At 273 to 290 (GTFQEDIYCHKFIQQVYL) the chain is on the extracellular side. Residues 291–310 (ALFWLAMSSTMYNPIIYCCL) form a helical membrane-spanning segment. Over 311 to 384 (NHRFRSGFRL…SPQAGVSTEP (74 aa)) the chain is Cytoplasmic. Cysteine 324 carries the S-palmitoyl cysteine lipid modification.

Belongs to the G-protein coupled receptor 1 family.

The protein resides in the cell membrane. Functionally, this is a receptor for the tachykinin neuropeptide substance K (neurokinin A). It is associated with G proteins that activate a phosphatidylinositol-calcium second messenger system. The rank order of affinity of this receptor to tachykinins is: substance K &gt; neuromedin-K &gt; substance P. The polypeptide is Substance-K receptor (TACR2) (Bos taurus (Bovine)).